The sequence spans 244 residues: Putative membrane peptidase YdiL (244 aa).

6 helical membrane-spanning segments follow: residues 7 to 27, 44 to 64, 80 to 100, 127 to 147, 159 to 179, and 202 to 222; these read FIIL…PLLF, AQGL…LLIL, IGLS…SQGI, AVPL…EIIF, TNFF…HADL, and IWVP…MQLE. Residues E143 and H176 each act as proton donor/acceptor in the active site.

The protein belongs to the peptidase U48 family.

Its subcellular location is the cell membrane. Its function is as follows. May function as endopeptidase which proteolytically removes the C-terminal three residues of farnesylated peptides containing the CAAX motif where C is cysteine, A is an aliphatic amino acid and X is any amino acid. The chain is Putative membrane peptidase YdiL (ydiL) from Bacillus subtilis (strain 168).